A 294-amino-acid polypeptide reads, in one-letter code: Thymidylate synthase (294 aa).

DUMP-binding positions include arginine 31 and 156–157 (RR). Residue cysteine 176 is the Nucleophile of the active site. DUMP contacts are provided by residues 196–199 (RSAD), asparagine 207, and 237–239 (HIY). Aspartate 199 lines the (6R)-5,10-methylene-5,6,7,8-tetrahydrofolate pocket. Alanine 293 is a binding site for (6R)-5,10-methylene-5,6,7,8-tetrahydrofolate.

Belongs to the thymidylate synthase family. As to quaternary structure, homodimer.

The enzyme catalyses dUMP + (6R)-5,10-methylene-5,6,7,8-tetrahydrofolate = 7,8-dihydrofolate + dTMP. It participates in pyrimidine metabolism; dTTP biosynthesis. The sequence is that of Thymidylate synthase (70) from Saimiri sciureus (Common squirrel monkey).